Here is a 461-residue protein sequence, read N- to C-terminus: A-type ATP synthase subunit B (461 aa).

This sequence belongs to the ATPase alpha/beta chains family. In terms of assembly, has multiple subunits with at least A(3), B(3), C, D, E, F, H, I and proteolipid K(x).

Its subcellular location is the cell membrane. Functionally, component of the A-type ATP synthase that produces ATP from ADP in the presence of a proton gradient across the membrane. The B chain is a regulatory subunit. In Nitrosopumilus maritimus (strain SCM1), this protein is A-type ATP synthase subunit B.